The sequence spans 396 residues: MEFLKTCVLRRNACTAVCFWRSKVVQKPSVRRISTTSPRSTVMPAWVIDKYGKNEVLRFTQNMMMPIIHYPNEVIVKVHAASVNPIDVNMRSGYGATALNMKRDPLHVKIKGEEFPLTLGRDVSGVVMECGLDVKYFKPGDEVWAAVPPWKQGTLSEFVVVSGNEVSHKPKSLTHTQAASLPYVALTAWSAINKVGGLNDKNCTGKRVLILGASGGVGTFAIQVMKAWDAHVTAVCSQDASELVRKLGADDVIDYKSGSVEEQLKSLKPFDFILDNVGGSTETWAPDFLKKWSGATYVTLVTPFLLNMDRLGIADGMLQTGVTVGSKALKHFWKGVHYRWAFFMASGPCLDDIAELVDAGKIRPVIEQTFPFSKVPEAFLKVERGHARGKTVINVV.

A mitochondrion-targeting transit peptide spans 1–40; sequence MEFLKTCVLRRNACTAVCFWRSKVVQKPSVRRISTTSPRS. Residues 52-393 enclose the Enoyl reductase (ER) domain; the sequence is GKNEVLRFTQ…RGHARGKTVI (342 aa). 12 residues coordinate NADPH: S214, G216, V217, S237, Y255, N276, L300, A341, F343, H386, A387, and R388.

This sequence belongs to the zinc-containing alcohol dehydrogenase family. Quinone oxidoreductase subfamily. As to quaternary structure, interacts with RTN4, UQCRC1 and UQCRC2. Widely expressed in mitochondria-enriched tissues. Found in heart, muscle, kidney, liver, brain and placenta.

It is found in the mitochondrion matrix. It localises to the mitochondrion outer membrane. It carries out the reaction a 3-demethylubiquinone + NADH + 2 H(+) = a 3-demethylubiquinol + NAD(+). The catalysed reaction is a 3-demethylubiquinone + NADPH + 2 H(+) = a 3-demethylubiquinol + NADP(+). The enzyme catalyses 3-demethylubiquinone-10 + NADH + 2 H(+) = 3-demethylubiquinol-10 + NAD(+). It catalyses the reaction 3-demethylubiquinone-10 + NADPH + 2 H(+) = 3-demethylubiquinol-10 + NADP(+). The protein operates within cofactor biosynthesis; ubiquinone biosynthesis. Functionally, NAD(P)H oxidoreductase involved in the ubiquinone biosynthetic pathway. Required for the O-methyltransferase activity of COQ3. Able to catalyze the oxidoreduction of 3-demethylubiquinone into 3-demethylubiquinol in vitro. However, it is unclear if 3-demethylubiquinone constitutes a substrate in vivo. May also play a role in the regulation of retinal ganglion cell (RGC) neurite outgrowth, and hence in the development of the inner retina and optic nerve. Appears to be a potent inhibitor of regeneration following spinal cord injury. In Homo sapiens (Human), this protein is NAD(P)H oxidoreductase RTN4IP1, mitochondrial.